Consider the following 249-residue polypeptide: 5'-nucleotidase SurE (249 aa).

Positions 9, 10, 40, and 92 each coordinate a divalent metal cation.

Belongs to the SurE nucleotidase family. It depends on a divalent metal cation as a cofactor.

The protein resides in the cytoplasm. The catalysed reaction is a ribonucleoside 5'-phosphate + H2O = a ribonucleoside + phosphate. Its function is as follows. Nucleotidase that shows phosphatase activity on nucleoside 5'-monophosphates. This chain is 5'-nucleotidase SurE, found in Shewanella sp. (strain ANA-3).